The following is a 64-amino-acid chain: Small ribosomal subunit protein bS21 (64 aa).

Belongs to the bacterial ribosomal protein bS21 family.

The polypeptide is Small ribosomal subunit protein bS21 (Pelagibacter ubique (strain HTCC1062)).